Consider the following 294-residue polypeptide: uncharacterized protein (294 aa).

The disordered stretch occupies residues 259–294 (LNAPTPIPPPITSHAGQEEALKPQRASKGKKAKARK). Basic residues predominate over residues 283-294 (RASKGKKAKARK).

This is an uncharacterized protein from Homo sapiens (Human).